Consider the following 775-residue polypeptide: WD repeat-containing protein pop1 (775 aa).

Residues 298–345 (KNFLTGFPAEITNLVLTHLDAPSLCAVSQVSHHWYKLVSSNEELWKSL) form the F-box domain. WD repeat units follow at residues 444 to 472 (EHEG…RVWD), 484 to 538 (GHTS…RLWS), 575 to 603 (GHTD…RVWK), 615 to 645 (GHVG…RIWN), and 657 to 687 (GHSN…RVWD).

Homodimer and heterodimer with pop2. Binds to cdc18, phosphorylated cig2, cul1, pip1 and skp1.

The protein resides in the nucleus. In terms of biological role, involved in maintenance of ploidy through proteasome dependent degradation of CDK inhibitor rum1 and S-phase initiator cdc18. Functions as a recognition factor for rum1 and cdc18, which are subsequently ubiquitinated and targeted to the 26S proteasome for degradation. Together with pop2, required for cig2 instability during G2 and M phase and cig2 degradation in exponentially growing cells. Regulates cell-cycle progression under starvation through the rum1 protein. This Schizosaccharomyces pombe (strain 972 / ATCC 24843) (Fission yeast) protein is WD repeat-containing protein pop1 (pop1).